Here is an 86-residue protein sequence, read N- to C-terminus: Cell division topological specificity factor (86 aa).

It belongs to the MinE family.

Its function is as follows. Prevents the cell division inhibition by proteins MinC and MinD at internal division sites while permitting inhibition at polar sites. This ensures cell division at the proper site by restricting the formation of a division septum at the midpoint of the long axis of the cell. In Aliivibrio salmonicida (strain LFI1238) (Vibrio salmonicida (strain LFI1238)), this protein is Cell division topological specificity factor.